The primary structure comprises 566 residues: Mucolipin-2 (566 aa).

At Met-1–Lys-65 the chain is on the cytoplasmic side. The chain crosses the membrane as a helical span at residues Leu-66–Ser-86. Residues Asn-87–His-288 lie on the Extracellular side of the membrane. The segment at Lys-107–Thr-123 is extracellular/lumenal pore loop. 2 cysteine pairs are disulfide-bonded: Cys-164-Cys-190 and Cys-243-Cys-274. A helical transmembrane segment spans residues Tyr-289–Thr-309. The Cytoplasmic portion of the chain corresponds to Arg-310–Trp-346. A helical membrane pass occupies residues Tyr-347–Ile-367. Residues Lys-368–Asp-376 are Extracellular-facing. Residues Val-377–Leu-397 traverse the membrane as a helical segment. Topologically, residues Gly-398–Arg-419 are cytoplasmic. A helical transmembrane segment spans residues Phe-420–Gly-440. Topologically, residues Pro-441 to Asn-448 are extracellular. The segment at residues Leu-449 to Phe-469 is an intramembrane region (pore-forming). The Selectivity filter motif lies at Asn-461 to Asp-464. Topologically, residues Ala-470 to Trp-480 are extracellular. Residues Leu-481–Phe-502 traverse the membrane as a helical segment. At Ile-503–Asp-566 the chain is on the cytoplasmic side.

It belongs to the transient receptor (TC 1.A.4) family. Polycystin subfamily. MCOLN2 sub-subfamily. Forms homooligomeric complexes; probably tetrameric. Can heterooligomerize with MCOLN1; heteromeric assemblies have different channel properties as compared to the respective homooligomers and may be tissue-specific. Interacts with TMEM176A. Expressed in activated macrophages and microglia (at protein level). In terms of tissue distribution, isoform 1 is widely expressed at very low levels. As to expression, isoform 2 is expressed at high levels in lymphoid tissues (thymus and spleen) and kidney, and at moderate levels in heart, lung, liver and stomach.

The protein localises to the cell membrane. It is found in the lysosome membrane. Its subcellular location is the recycling endosome membrane. The catalysed reaction is Ca(2+)(in) = Ca(2+)(out). It carries out the reaction Fe(2+)(in) = Fe(2+)(out). Its activity is regulated as follows. Fe(2+) channel activity is potentiated by low pH. Its function is as follows. Nonselective cation channel probably playing a role in the regulation of membrane trafficking events. Acts as a Ca(2+)-permeable cation channel with inwardly rectifying activity. May activate ARF6 and be involved in the trafficking of GPI-anchored cargo proteins to the cell surface via the ARF6-regulated recycling pathway. May play a role in immune processes. In adaptive immunity, TRPML2 and TRPML1 may play redundant roles in the function of the specialized lysosomes of B cells. In the innate immune response, may play a role in the regulation of chemokine secretion and macrophage migration. Through a possible and probably tissue-specific heteromerization with MCOLN1 may be at least in part involved in many lysosome-dependent cellular events. Also functions as a Fe(2+) permeable channel. The chain is Mucolipin-2 (Mcoln2) from Mus musculus (Mouse).